The sequence spans 144 residues: MLLPKRVKYRRQHRPKTTGRSKGGNYVTFGEYGLQATTTSWITSRQIESARIAMTRYMKRGGKVWIKIFPHTPYTKKPLEVRMGAGKGAVEGWIAVVKPGRILFEVAGVSEEVAREALRLASHKLPVKTKFVKREELGGETNES.

Residues 1–19 show a composition bias toward basic residues; that stretch reads MLLPKRVKYRRQHRPKTTG. The disordered stretch occupies residues 1–23; it reads MLLPKRVKYRRQHRPKTTGRSKG.

The protein belongs to the universal ribosomal protein uL16 family. As to quaternary structure, part of the 50S ribosomal subunit.

In terms of biological role, binds 23S rRNA and is also seen to make contacts with the A and possibly P site tRNAs. The sequence is that of Large ribosomal subunit protein uL16 from Staphylococcus haemolyticus (strain JCSC1435).